The chain runs to 283 residues: ATP phosphoribosyltransferase (283 aa).

Belongs to the ATP phosphoribosyltransferase family. Long subfamily. Requires Mg(2+) as cofactor.

It is found in the cytoplasm. The catalysed reaction is 1-(5-phospho-beta-D-ribosyl)-ATP + diphosphate = 5-phospho-alpha-D-ribose 1-diphosphate + ATP. It functions in the pathway amino-acid biosynthesis; L-histidine biosynthesis; L-histidine from 5-phospho-alpha-D-ribose 1-diphosphate: step 1/9. Feedback inhibited by histidine. Its function is as follows. Catalyzes the condensation of ATP and 5-phosphoribose 1-diphosphate to form N'-(5'-phosphoribosyl)-ATP (PR-ATP). Has a crucial role in the pathway because the rate of histidine biosynthesis seems to be controlled primarily by regulation of HisG enzymatic activity. This chain is ATP phosphoribosyltransferase, found in Bifidobacterium longum (strain DJO10A).